Here is a 236-residue protein sequence, read N- to C-terminus: UPF0257 lipoprotein YnfC (236 aa).

A signal peptide spans 1–16 (MKYKLLPCLLAILLTG). C17 carries the N-palmitoyl cysteine lipid modification. The S-diacylglycerol cysteine moiety is linked to residue C17.

Belongs to the UPF0257 family.

It localises to the cell membrane. The sequence is that of UPF0257 lipoprotein YnfC from Escherichia coli O45:K1 (strain S88 / ExPEC).